Consider the following 377-residue polypeptide: Probable isocitrate dehydrogenase [NAD] subunit alpha, mitochondrial (377 aa).

Residues R131, R141, R162, and D249 each contribute to the substrate site. 3 residues coordinate Mg(2+): D249, D273, and D277.

The protein belongs to the isocitrate and isopropylmalate dehydrogenases family. In terms of assembly, heterooligomer of subunits alpha, beta, and gamma in the apparent ratio of 2:1:1. It depends on Mg(2+) as a cofactor. Mn(2+) serves as cofactor.

The protein resides in the mitochondrion. The catalysed reaction is D-threo-isocitrate + NAD(+) = 2-oxoglutarate + CO2 + NADH. Functionally, probable catalytic subunit of the enzyme which catalyzes the decarboxylation of isocitrate (ICT) into alpha-ketoglutarate. The protein is Probable isocitrate dehydrogenase [NAD] subunit alpha, mitochondrial of Drosophila melanogaster (Fruit fly).